The chain runs to 471 residues: Ribulose bisphosphate carboxylase large chain (471 aa).

K5 carries the N6,N6,N6-trimethyllysine modification. Residues N114 and T164 each coordinate substrate. The active-site Proton acceptor is K166. Residue K168 participates in substrate binding. The Mg(2+) site is built by K192, D194, and E195. At K192 the chain carries N6-carboxylysine. H285 serves as the catalytic Proton acceptor. The substrate site is built by R286, H318, and S370.

Belongs to the RuBisCO large chain family. Type I subfamily. In terms of assembly, heterohexadecamer of 8 large chains and 8 small chains; disulfide-linked. The disulfide link is formed within the large subunit homodimers. It depends on Mg(2+) as a cofactor. In terms of processing, the disulfide bond which can form in the large chain dimeric partners within the hexadecamer appears to be associated with oxidative stress and protein turnover.

The protein resides in the plastid. It localises to the chloroplast. It catalyses the reaction 2 (2R)-3-phosphoglycerate + 2 H(+) = D-ribulose 1,5-bisphosphate + CO2 + H2O. The catalysed reaction is D-ribulose 1,5-bisphosphate + O2 = 2-phosphoglycolate + (2R)-3-phosphoglycerate + 2 H(+). In terms of biological role, ruBisCO catalyzes two reactions: the carboxylation of D-ribulose 1,5-bisphosphate, the primary event in carbon dioxide fixation, as well as the oxidative fragmentation of the pentose substrate in the photorespiration process. Both reactions occur simultaneously and in competition at the same active site. This chain is Ribulose bisphosphate carboxylase large chain, found in Chiococca alba (West Indian milkberry).